A 176-amino-acid chain; its full sequence is Inorganic pyrophosphatase (176 aa).

Residues Lys-30, Arg-44, and Tyr-56 each contribute to the substrate site. Mg(2+) is bound by residues Asp-66, Asp-71, and Asp-103. Tyr-142 is a substrate binding site.

This sequence belongs to the PPase family. In terms of assembly, homohexamer. It depends on Mg(2+) as a cofactor.

It localises to the cytoplasm. It catalyses the reaction diphosphate + H2O = 2 phosphate + H(+). In terms of biological role, catalyzes the hydrolysis of inorganic pyrophosphate (PPi) forming two phosphate ions. The protein is Inorganic pyrophosphatase of Escherichia coli O157:H7.